A 290-amino-acid polypeptide reads, in one-letter code: 4-diphosphocytidyl-2-C-methyl-D-erythritol kinase (290 aa).

Lys14 is a catalytic residue. Residue 103 to 113 (PMGGGLGGGSS) coordinates ATP. The active site involves Asp145.

Belongs to the GHMP kinase family. IspE subfamily. Homodimer.

It carries out the reaction 4-CDP-2-C-methyl-D-erythritol + ATP = 4-CDP-2-C-methyl-D-erythritol 2-phosphate + ADP + H(+). It functions in the pathway isoprenoid biosynthesis; isopentenyl diphosphate biosynthesis via DXP pathway; isopentenyl diphosphate from 1-deoxy-D-xylulose 5-phosphate: step 3/6. Its function is as follows. Catalyzes the phosphorylation of the position 2 hydroxy group of 4-diphosphocytidyl-2C-methyl-D-erythritol. This is 4-diphosphocytidyl-2-C-methyl-D-erythritol kinase from Pectobacterium atrosepticum (strain SCRI 1043 / ATCC BAA-672) (Erwinia carotovora subsp. atroseptica).